The following is a 262-amino-acid chain: Phosphonates import ATP-binding protein PhnC (262 aa).

The region spanning 5–253 is the ABC transporter domain; that stretch reads IRVEKLAKTF…RFDHLYRSIN (249 aa). 37–44 is an ATP binding site; sequence GPSGSGKS.

The protein belongs to the ABC transporter superfamily. Phosphonates importer (TC 3.A.1.9.1) family. The complex is composed of two ATP-binding proteins (PhnC), two transmembrane proteins (PhnE) and a solute-binding protein (PhnD).

The protein localises to the cell inner membrane. The enzyme catalyses phosphonate(out) + ATP + H2O = phosphonate(in) + ADP + phosphate + H(+). Part of the ABC transporter complex PhnCDE involved in phosphonates import. Responsible for energy coupling to the transport system. This Shigella boydii serotype 4 (strain Sb227) protein is Phosphonates import ATP-binding protein PhnC.